The chain runs to 585 residues: Pyruvate kinase (585 aa).

Substrate is bound at residue arginine 32. K(+) is bound by residues asparagine 34, serine 36, aspartate 66, and threonine 67. Position 34–37 (34–37 (NFSH)) interacts with ATP. ATP is bound by residues arginine 73 and lysine 156. Residue glutamate 221 participates in Mg(2+) binding. 3 residues coordinate substrate: glycine 244, aspartate 245, and threonine 277. Residue aspartate 245 participates in Mg(2+) binding.

It belongs to the pyruvate kinase family. The protein in the C-terminal section; belongs to the PEP-utilizing enzyme family. Mg(2+) is required as a cofactor. Requires K(+) as cofactor.

It catalyses the reaction pyruvate + ATP = phosphoenolpyruvate + ADP + H(+). It functions in the pathway carbohydrate degradation; glycolysis; pyruvate from D-glyceraldehyde 3-phosphate: step 5/5. This Staphylococcus aureus (strain USA300) protein is Pyruvate kinase (pyk).